The chain runs to 93 residues: YcgL domain-containing protein Shal_1837 (93 aa).

The region spanning 1–85 (MICAVYKSRR…PVVNLLEQHK (85 aa)) is the YcgL domain.

This is YcgL domain-containing protein Shal_1837 from Shewanella halifaxensis (strain HAW-EB4).